A 349-amino-acid chain; its full sequence is Hydroxymethylglutaryl-CoA synthase (349 aa).

(3S)-3-hydroxy-3-methylglutaryl-CoA is bound by residues aspartate 29 and alanine 30. The Proton donor/acceptor role is filled by glutamate 81. Positions 113 and 154 each coordinate (3S)-3-hydroxy-3-methylglutaryl-CoA. The active-site Acyl-thioester intermediate is cysteine 113. Position 202 (arginine 202) interacts with CoA. (3S)-3-hydroxy-3-methylglutaryl-CoA-binding residues include threonine 204 and histidine 237. The active-site Proton donor/acceptor is the histidine 237. Lysine 242 is a binding site for CoA. The (3S)-3-hydroxy-3-methylglutaryl-CoA site is built by lysine 246, asparagine 269, and serine 299.

The protein belongs to the thiolase-like superfamily. Archaeal HMG-CoA synthase family. Interacts with acetoacetyl-CoA thiolase that catalyzes the precedent step in the pathway and with a DUF35 protein. The acetoacetyl-CoA thiolase/HMG-CoA synthase complex channels the intermediate via a fused CoA-binding site, which allows for efficient coupling of the endergonic thiolase reaction with the exergonic HMGCS reaction.

The enzyme catalyses acetoacetyl-CoA + acetyl-CoA + H2O = (3S)-3-hydroxy-3-methylglutaryl-CoA + CoA + H(+). Its pathway is metabolic intermediate biosynthesis; (R)-mevalonate biosynthesis; (R)-mevalonate from acetyl-CoA: step 2/3. Functionally, catalyzes the condensation of acetyl-CoA with acetoacetyl-CoA to form 3-hydroxy-3-methylglutaryl-CoA (HMG-CoA). Functions in the mevalonate (MVA) pathway leading to isopentenyl diphosphate (IPP), a key precursor for the biosynthesis of isoprenoid compounds that are building blocks of archaeal membrane lipids. The sequence is that of Hydroxymethylglutaryl-CoA synthase from Methanosarcina barkeri (strain Fusaro / DSM 804).